The sequence spans 359 residues: Phosphoserine aminotransferase (359 aa).

Residue arginine 41 participates in L-glutamate binding. Residues 75–76 (AS), tryptophan 101, threonine 152, aspartate 171, and glutamine 194 each bind pyridoxal 5'-phosphate. The residue at position 195 (lysine 195) is an N6-(pyridoxal phosphate)lysine. Residue 236–237 (NT) participates in pyridoxal 5'-phosphate binding.

The protein belongs to the class-V pyridoxal-phosphate-dependent aminotransferase family. SerC subfamily. In terms of assembly, homodimer. Pyridoxal 5'-phosphate serves as cofactor.

It is found in the cytoplasm. The enzyme catalyses O-phospho-L-serine + 2-oxoglutarate = 3-phosphooxypyruvate + L-glutamate. It catalyses the reaction 4-(phosphooxy)-L-threonine + 2-oxoglutarate = (R)-3-hydroxy-2-oxo-4-phosphooxybutanoate + L-glutamate. The protein operates within amino-acid biosynthesis; L-serine biosynthesis; L-serine from 3-phospho-D-glycerate: step 2/3. Its pathway is cofactor biosynthesis; pyridoxine 5'-phosphate biosynthesis; pyridoxine 5'-phosphate from D-erythrose 4-phosphate: step 3/5. In terms of biological role, catalyzes the reversible conversion of 3-phosphohydroxypyruvate to phosphoserine and of 3-hydroxy-2-oxo-4-phosphonooxybutanoate to phosphohydroxythreonine. This Acinetobacter baylyi (strain ATCC 33305 / BD413 / ADP1) protein is Phosphoserine aminotransferase.